The following is a 354-amino-acid chain: Neutral protease 2 homolog MEP3 (354 aa).

An N-terminal signal peptide occupies residues Met1–Ala19. Positions Phe20 to Arg179 are excised as a propeptide. 2 cysteine pairs are disulfide-bonded: Cys186/Cys256 and Cys263/Cys281. His305 is a binding site for Zn(2+). Glu306 is an active-site residue. Zn(2+)-binding residues include His309 and Asp320.

The protein belongs to the peptidase M35 family. The cofactor is Zn(2+).

It is found in the secreted. The enzyme catalyses Preferential cleavage of bonds with hydrophobic residues in P1'. Also 3-Asn-|-Gln-4 and 8-Gly-|-Ser-9 bonds in insulin B chain.. In terms of biological role, secreted metalloproteinase that allows assimilation of proteinaceous substrates. Shows high activities on basic nuclear substrates such as histone and protamine. May be involved in virulence. The protein is Neutral protease 2 homolog MEP3 (MEP3) of Coccidioides posadasii (strain C735) (Valley fever fungus).